Reading from the N-terminus, the 122-residue chain is Ribosome-binding factor A (122 aa).

Belongs to the RbfA family. As to quaternary structure, monomer. Binds 30S ribosomal subunits, but not 50S ribosomal subunits or 70S ribosomes.

The protein localises to the cytoplasm. Its function is as follows. One of several proteins that assist in the late maturation steps of the functional core of the 30S ribosomal subunit. Associates with free 30S ribosomal subunits (but not with 30S subunits that are part of 70S ribosomes or polysomes). Required for efficient processing of 16S rRNA. May interact with the 5'-terminal helix region of 16S rRNA. The sequence is that of Ribosome-binding factor A from Anaeromyxobacter sp. (strain Fw109-5).